Reading from the N-terminus, the 247-residue chain is Probable transcriptional regulatory protein lpg1286 (247 aa).

The protein belongs to the TACO1 family.

Its subcellular location is the cytoplasm. The protein is Probable transcriptional regulatory protein lpg1286 of Legionella pneumophila subsp. pneumophila (strain Philadelphia 1 / ATCC 33152 / DSM 7513).